Here is a 452-residue protein sequence, read N- to C-terminus: LIM/homeobox protein lim-7 (452 aa).

2 LIM zinc-binding domains span residues 54–116 (AVCA…LFTT) and 117–179 (RCSR…LDNP). The segment at 184-268 (SVPDYSKLNN…KKKDKQATRV (85 aa)) is disordered. Low complexity-rich tracts occupy residues 192–205 (NNNN…SSSN) and 217–227 (TLTSLDNNTSS). The homeobox DNA-binding region spans 265–324 (ATRVRTVLNENQLKILRDCYSINSRPDATLKERLVEMTGLSARVIRVWFQNKRCKDKKRQ). The LIM interaction domain (LID) stretch occupies residues 347-376 (GIGPLMVQPATPHIDNTLGGPIDIQHFAQW).

As to quaternary structure, interacts (via LID domain) with ceh-14 (via LIM zinc-binding domains 1 and 2). As to expression, expressed in gonadal sheath cells, URA motoneurons, and 10 additional cells near the isthmus and terminal bulb of the pharynx. Expressed in the ALA and BDU cells.

It localises to the nucleus. Probable DNA-binding transcriptional activator. This chain is LIM/homeobox protein lim-7, found in Caenorhabditis elegans.